Consider the following 140-residue polypeptide: Large ribosomal subunit protein bL17 (140 aa).

Belongs to the bacterial ribosomal protein bL17 family. As to quaternary structure, part of the 50S ribosomal subunit. Contacts protein L32.

This Rhizobium johnstonii (strain DSM 114642 / LMG 32736 / 3841) (Rhizobium leguminosarum bv. viciae) protein is Large ribosomal subunit protein bL17.